Consider the following 366-residue polypeptide: MWNATPSEEPGFNLTLADLDWDASPGNDSLGDELLQLFPAPLLAGVTATCVALFVVGIAGNLLTMLVVSRFRELRTTTNLYLSSMAFSDLLIFLCMPLDLVRLWQYRPWNFGDLLCKLFQFVSESCTYATVLTITALSVERYFAICFPLRAKVVVTKGRVKLVIFVIWAVAFCSAGPIFVLVGVEHENGTDPWDTNECRPTEFAVRSGLLTVMVWVSSIFFFLPVFCLTVLYSLIGRKLWRRRRGDAVVGASLRDQNHKQTVKMLAVVVFAFILCWLPFHVGRYLFSKSFEPGSLEIAQISQYCNLVSFVLFYLSAAINPILYNIMSKKYRVAVFRLLGFEPFSQRKLSTLKDESSRAWTESSINT.

Residues 1–40 (MWNATPSEEPGFNLTLADLDWDASPGNDSLGDELLQLFPA) are Extracellular-facing. Asparagine 13 and asparagine 27 each carry an N-linked (GlcNAc...) asparagine glycan. A helical transmembrane segment spans residues 41–66 (PLLAGVTATCVALFVVGIAGNLLTML). The Cytoplasmic portion of the chain corresponds to 67–72 (VVSRFR). A helical membrane pass occupies residues 73–96 (ELRTTTNLYLSSMAFSDLLIFLCM). The Extracellular segment spans residues 97 to 117 (PLDLVRLWQYRPWNFGDLLCK). Residues cysteine 116 and cysteine 198 are joined by a disulfide bond. A helical membrane pass occupies residues 118–139 (LFQFVSESCTYATVLTITALSV). Residues 140–162 (ERYFAICFPLRAKVVVTKGRVKL) lie on the Cytoplasmic side of the membrane. A helical membrane pass occupies residues 163–183 (VIFVIWAVAFCSAGPIFVLVG). At 184–211 (VEHENGTDPWDTNECRPTEFAVRSGLLT) the chain is on the extracellular side. The helical transmembrane segment at 212–235 (VMVWVSSIFFFLPVFCLTVLYSLI) threads the bilayer. Residues 236–263 (GRKLWRRRRGDAVVGASLRDQNHKQTVK) lie on the Cytoplasmic side of the membrane. Residues 264-285 (MLAVVVFAFILCWLPFHVGRYL) form a helical membrane-spanning segment. Residues 286–302 (FSKSFEPGSLEIAQISQ) lie on the Extracellular side of the membrane. Residues 303 to 326 (YCNLVSFVLFYLSAAINPILYNIM) traverse the membrane as a helical segment. Topologically, residues 327–366 (SKKYRVAVFRLLGFEPFSQRKLSTLKDESSRAWTESSINT) are cytoplasmic.

The protein belongs to the G-protein coupled receptor 1 family. As to expression, pituitary and hypothalamus.

It is found in the cell membrane. Receptor for ghrelin, coupled to G-alpha-11 proteins. Stimulates growth hormone secretion. Also binds other growth hormone releasing peptides (GHRP) (e.g. Met-enkephalin and GHRP-6) as well as non-peptide, low molecular weight secretagogues (e.g. L-692,429, MK-0677, adenosine). The chain is Growth hormone secretagogue receptor type 1 (GHSR) from Homo sapiens (Human).